We begin with the raw amino-acid sequence, 30 residues long: Photosystem I reaction center subunit XII (30 aa).

Residues 5–25 (SQIFFALCIALTAAVLAIGLG) form a helical membrane-spanning segment.

It belongs to the PsaM family.

It localises to the plastid. It is found in the chloroplast thylakoid membrane. The chain is Photosystem I reaction center subunit XII from Emiliania huxleyi (Coccolithophore).